We begin with the raw amino-acid sequence, 117 residues long: Aspartate 1-decarboxylase (117 aa).

The active-site Schiff-base intermediate with substrate; via pyruvic acid is the Ser25. Position 25 is a pyruvic acid (Ser) (Ser25). Thr57 contributes to the substrate binding site. Tyr58 serves as the catalytic Proton donor. 72 to 74 provides a ligand contact to substrate; the sequence is GAA.

This sequence belongs to the PanD family. Heterooctamer of four alpha and four beta subunits. Requires pyruvate as cofactor. In terms of processing, is synthesized initially as an inactive proenzyme, which is activated by self-cleavage at a specific serine bond to produce a beta-subunit with a hydroxyl group at its C-terminus and an alpha-subunit with a pyruvoyl group at its N-terminus.

Its subcellular location is the cytoplasm. The catalysed reaction is L-aspartate + H(+) = beta-alanine + CO2. Its pathway is cofactor biosynthesis; (R)-pantothenate biosynthesis; beta-alanine from L-aspartate: step 1/1. Its function is as follows. Catalyzes the pyruvoyl-dependent decarboxylation of aspartate to produce beta-alanine. The polypeptide is Aspartate 1-decarboxylase (Helicobacter pylori (strain J99 / ATCC 700824) (Campylobacter pylori J99)).